The sequence spans 146 residues: uncharacterized protein (146 aa).

An N-terminal signal peptide occupies residues 1–17 (MKRLLILTALLPFVGFA). 2 disordered regions span residues 27 to 54 (NQPG…KGML) and 70 to 146 (ENQI…TIGP). The span at 32-54 (QIPSQQRMQTQMQTQQIQQKGML) shows a compositional bias: low complexity. Over residues 77 to 118 (SQRVLQSQPGERNPARQQMLPNTNGGMLNSNRNPDSSLNQQH) the composition is skewed to polar residues.

This is an uncharacterized protein from Escherichia coli (strain K12).